Consider the following 627-residue polypeptide: Altered inheritance of mitochondria protein 9, mitochondrial (627 aa).

A mitochondrion-targeting transit peptide spans 1–43 (MIRYTVAGHSRRCVVGASKRVGAIKCITVAATKRFISNKPNEV).

Belongs to the AIM9 family.

It localises to the mitochondrion. The protein is Altered inheritance of mitochondria protein 9, mitochondrial (AIM9) of Saccharomyces cerevisiae (strain YJM789) (Baker's yeast).